A 457-amino-acid polypeptide reads, in one-letter code: Argininosuccinate lyase (457 aa).

The protein belongs to the lyase 1 family. Argininosuccinate lyase subfamily.

It localises to the cytoplasm. It carries out the reaction 2-(N(omega)-L-arginino)succinate = fumarate + L-arginine. Its pathway is amino-acid biosynthesis; L-arginine biosynthesis; L-arginine from L-ornithine and carbamoyl phosphate: step 3/3. This is Argininosuccinate lyase from Yersinia pseudotuberculosis serotype O:1b (strain IP 31758).